A 310-amino-acid chain; its full sequence is Olfactory receptor 4K14 (310 aa).

Residues methionine 1–asparagine 25 are Extracellular-facing. Asparagine 5 carries an N-linked (GlcNAc...) asparagine glycan. The helical transmembrane segment at phenylalanine 26 to valine 49 threads the bilayer. At isoleucine 50–serine 58 the chain is on the cytoplasmic side. A helical membrane pass occupies residues proline 59–proline 80. The Extracellular portion of the chain corresponds to lysine 81 to glutamine 101. An intrachain disulfide couples cysteine 98 to cysteine 190. A helical membrane pass occupies residues isoleucine 102–tyrosine 121. Topologically, residues aspartate 122–glutamine 140 are cytoplasmic. Residues threonine 141–serine 159 form a helical membrane-spanning segment. At glutamine 160 to leucine 196 the chain is on the extracellular side. Residues glycine 197–threonine 220 form a helical membrane-spanning segment. Residues valine 221 to lysine 236 are Cytoplasmic-facing. A helical membrane pass occupies residues alanine 237–tyrosine 259. The Extracellular segment spans residues valine 260–lysine 270. A helical membrane pass occupies residues leucine 271–leucine 290. Over arginine 291–glutamine 310 the chain is Cytoplasmic.

It belongs to the G-protein coupled receptor 1 family.

The protein localises to the cell membrane. In terms of biological role, odorant receptor. This Homo sapiens (Human) protein is Olfactory receptor 4K14 (OR4K14).